A 430-amino-acid polypeptide reads, in one-letter code: MANVVVVGAQWGDEGKGKIVDWLSEQADIVVRFQGGHNAGHTLVINGETYKLALLPSGVLRPSKLAVIGNGVVFDPQAFLDEVKKLQAQGVAISPENLRVAENVTLILPLHRELDAQRETAAKAGAIGTTQRGIGPAYEDKVGRRAIRLMDLADLAALPPKIDRLLAHHNALRRGLGLPEIDGAAILNELAALAPQLLPYAETVWRLLDIKRREGKRILFEGAQGALLDVDHGTYPYVTSSNTVAAQAATGTGMGPSSVGYVLGICKAYTTRVGAGPFPTELKNEIGEEIGRRGKEFGVNTGRKRRCGWFDAVLVRQTVRTCGIHGLALTKLDILDGFETIEVCVGYRLDGKEIDHLPAGEGAQARVEPIYETIEGWKEPTANARSWADLPAQAIKYVRRIEELVGCPVALLSTSPEREDTILVQNPFEA.

GTP is bound by residues 12-18 (GDEGKGK) and 40-42 (GHT). Residue Asp-13 is the Proton acceptor of the active site. Mg(2+)-binding residues include Asp-13 and Gly-40. IMP-binding positions include 13-16 (DEGK), 38-41 (NAGH), Thr-130, Arg-144, Gln-224, Thr-239, and Arg-303. The Proton donor role is filled by His-41. Position 299–305 (299–305 (VNTGRKR)) interacts with substrate. GTP-binding positions include Arg-305, 331–333 (KLD), and 413–415 (STS).

It belongs to the adenylosuccinate synthetase family. As to quaternary structure, homodimer. Mg(2+) serves as cofactor.

It is found in the cytoplasm. It carries out the reaction IMP + L-aspartate + GTP = N(6)-(1,2-dicarboxyethyl)-AMP + GDP + phosphate + 2 H(+). The protein operates within purine metabolism; AMP biosynthesis via de novo pathway; AMP from IMP: step 1/2. Functionally, plays an important role in the de novo pathway of purine nucleotide biosynthesis. Catalyzes the first committed step in the biosynthesis of AMP from IMP. The sequence is that of Adenylosuccinate synthetase from Rhodopseudomonas palustris (strain BisA53).